Reading from the N-terminus, the 444-residue chain is Glutamate--methylamine ligase (444 aa).

A GS beta-grasp domain is found at 14–97 (HHVKYVLAQF…LVCDGHVNGK (84 aa)). In terms of domain architecture, GS catalytic spans 103–444 (TRVVLKQQIA…WEINRYVQFY (342 aa)).

This sequence belongs to the glutamine synthetase family. Type 3 subfamily. Mg(2+) is required as a cofactor.

It catalyses the reaction methylamine + L-glutamate + ATP = N(5)-methyl-L-glutamine + ADP + phosphate + H(+). The enzyme catalyses ethylamine + L-glutamate + ATP = N(5)-ethyl-L-glutamine + ADP + phosphate + H(+). Formation of theanine is repressed by a high concentration of glutamic acid. Its function is as follows. Catalyzes the formation of N(5)-methyl-L-glutamine from glutamate and methylamine. In vitro, can also use ethylamine, hydroxylamine and ammonia, with 75%, 40% and 1% activity compared to methylamine, respectively. The polypeptide is Glutamate--methylamine ligase (Methylovorus mays).